The sequence spans 79 residues: Small ribosomal subunit protein bS18c (79 aa).

It belongs to the bacterial ribosomal protein bS18 family. In terms of assembly, part of the 30S ribosomal subunit.

Its subcellular location is the plastid. The protein resides in the chloroplast. This Physcomitrium patens (Spreading-leaved earth moss) protein is Small ribosomal subunit protein bS18c.